The primary structure comprises 822 residues: Ras GTPase-activating-like protein rgaA (822 aa).

The interval 1–36 (MNKEEYSDISDSESEEVHETNNHNEHEHEEEDDTPE) is disordered. A compositionally biased stretch (basic and acidic residues) spans 15–27 (EEVHETNNHNEHE). A coiled-coil region spans residues 104–152 (EDKESDWIAEIQELKRNLVSEVRRNHTLERDLNRLDKRIALLIKNRGNI). The tract at residues 161-822 (GLKAPKHKGD…IHLLNKLFLY (662 aa)) is required for interaction to rac1A. In terms of domain architecture, Ras-GAP spans 234–477 (FLLLSLYRLS…GDIKNYLQEI (244 aa)).

Heterotetramer. Quaternary complex with activated rac1A, ctxA and ctxB. Interacts directly with rac1A and ctxA. Preferentially interacts with activated forms of rac1A, rac1B and rac1C. Interacts with racE.

It is found in the cytoplasm. The protein resides in the cell cortex. Its subcellular location is the cleavage furrow. In terms of biological role, part of signaling pathway that is required for completion of cytokinesis. gapA and rgaA control cortexillin localization to the cleavage furrow and hence may be involved in cleavage of the midbody in the final stage of cytokinesis by regulating the actin cytoskeleton. Forms a complex by linking activated rac1A to ctxA. Assembly of this complex is necessary for the recruitment of cortexillin to the midzone of a dividing cell. Overexpression leads to the suppression of the formation of cellular projections containing F-actin and to a defect in cytokinesis. In Dictyostelium discoideum (Social amoeba), this protein is Ras GTPase-activating-like protein rgaA (rgaA).